The following is a 114-amino-acid chain: Cystatin Pr17a (114 aa).

Positions 1 to 18 (MSCLKIITLFLFLAAVIA) are cleaved as a signal peptide. A Cystatin domain is found at 31–109 (GAPEQINPND…QAWLKKTSVK (79 aa)). An intrachain disulfide couples C93 to C113.

This sequence belongs to the cystatin family. Expressed by the venom gland (posterior main gland) (at protein level).

It localises to the secreted. The chain is Cystatin Pr17a from Platymeris rhadamanthus (Red spot assassin bug).